The following is a 575-amino-acid chain: Dihydroxy-acid dehydratase (575 aa).

The tract at residues 1-25 (MPTTDSARAADIKQPDIKPRSRDVT) is disordered. Over residues 8–25 (RAADIKQPDIKPRSRDVT) the composition is skewed to basic and acidic residues. Cys-64 is a [2Fe-2S] cluster binding site. Mg(2+) is bound at residue Asp-96. Residue Cys-137 participates in [2Fe-2S] cluster binding. Positions 138 and 139 each coordinate Mg(2+). The residue at position 139 (Lys-139) is an N6-carboxylysine. Cys-214 contributes to the [2Fe-2S] cluster binding site. A Mg(2+)-binding site is contributed by Glu-465. The Proton acceptor role is filled by Ser-491.

It belongs to the IlvD/Edd family. Homodimer. It depends on [2Fe-2S] cluster as a cofactor. Mg(2+) serves as cofactor.

The catalysed reaction is (2R)-2,3-dihydroxy-3-methylbutanoate = 3-methyl-2-oxobutanoate + H2O. It carries out the reaction (2R,3R)-2,3-dihydroxy-3-methylpentanoate = (S)-3-methyl-2-oxopentanoate + H2O. It functions in the pathway amino-acid biosynthesis; L-isoleucine biosynthesis; L-isoleucine from 2-oxobutanoate: step 3/4. The protein operates within amino-acid biosynthesis; L-valine biosynthesis; L-valine from pyruvate: step 3/4. Functions in the biosynthesis of branched-chain amino acids. Catalyzes the dehydration of (2R,3R)-2,3-dihydroxy-3-methylpentanoate (2,3-dihydroxy-3-methylvalerate) into 2-oxo-3-methylpentanoate (2-oxo-3-methylvalerate) and of (2R)-2,3-dihydroxy-3-methylbutanoate (2,3-dihydroxyisovalerate) into 2-oxo-3-methylbutanoate (2-oxoisovalerate), the penultimate precursor to L-isoleucine and L-valine, respectively. The sequence is that of Dihydroxy-acid dehydratase from Mycolicibacterium paratuberculosis (strain ATCC BAA-968 / K-10) (Mycobacterium paratuberculosis).